We begin with the raw amino-acid sequence, 153 residues long: Small ribosomal subunit protein uS5c (153 aa).

Residues 11–74 enclose the S5 DRBM domain; it reads WQERVIQIRR…VDAKKQLINI (64 aa).

Belongs to the universal ribosomal protein uS5 family. As to quaternary structure, part of the 30S ribosomal subunit. Contacts protein S4.

It localises to the plastid. It is found in the chloroplast. Its function is as follows. With S4 and S12 plays an important role in translational accuracy. The chain is Small ribosomal subunit protein uS5c (rps5) from Cyanidioschyzon merolae (strain NIES-3377 / 10D) (Unicellular red alga).